The following is a 572-amino-acid chain: Proline--tRNA ligase (572 aa).

It belongs to the class-II aminoacyl-tRNA synthetase family. ProS type 1 subfamily. As to quaternary structure, homodimer.

The protein localises to the cytoplasm. It catalyses the reaction tRNA(Pro) + L-proline + ATP = L-prolyl-tRNA(Pro) + AMP + diphosphate. In terms of biological role, catalyzes the attachment of proline to tRNA(Pro) in a two-step reaction: proline is first activated by ATP to form Pro-AMP and then transferred to the acceptor end of tRNA(Pro). As ProRS can inadvertently accommodate and process non-cognate amino acids such as alanine and cysteine, to avoid such errors it has two additional distinct editing activities against alanine. One activity is designated as 'pretransfer' editing and involves the tRNA(Pro)-independent hydrolysis of activated Ala-AMP. The other activity is designated 'posttransfer' editing and involves deacylation of mischarged Ala-tRNA(Pro). The misacylated Cys-tRNA(Pro) is not edited by ProRS. The polypeptide is Proline--tRNA ligase (Buchnera aphidicola subsp. Acyrthosiphon pisum (strain APS) (Acyrthosiphon pisum symbiotic bacterium)).